The sequence spans 396 residues: Elongation factor Tu (396 aa).

The 196-residue stretch at 10–205 (KSHANIGTIG…AVDEYIPTPE (196 aa)) folds into the tr-type G domain. Residues 19–26 (GHVDHGKT) are G1. 19–26 (GHVDHGKT) serves as a coordination point for GTP. Position 26 (threonine 26) interacts with Mg(2+). A G2 region spans residues 61–65 (GITIS). Residues 82–85 (DCPG) are G3. Residues 82 to 86 (DCPGH) and 137 to 140 (NKCD) each bind GTP. Residues 137–140 (NKCD) form a G4 region. Positions 175–177 (SAL) are G5. Threonine 385 is modified (phosphothreonine).

This sequence belongs to the TRAFAC class translation factor GTPase superfamily. Classic translation factor GTPase family. EF-Tu/EF-1A subfamily. As to quaternary structure, monomer. Interacts with BrxC. Phosphorylated on Thr-385 in vitro by PrkC in the presence of poly-L-lysine or myelin basic protein, dephosphorylated by PrpC.

It localises to the cytoplasm. The enzyme catalyses GTP + H2O = GDP + phosphate + H(+). In terms of biological role, GTP hydrolase that promotes the GTP-dependent binding of aminoacyl-tRNA to the A-site of ribosomes during protein biosynthesis. This chain is Elongation factor Tu, found in Bacillus subtilis (strain 168).